Consider the following 198-residue polypeptide: Single-stranded DNA cytosine deaminase (198 aa).

The short motif at 1–30 is the Bipartite nuclear localization signal element; sequence MDSLLMKQRKFLYHFKNVRWAKGRHETYLC. The tract at residues 2–26 is interaction with SUPT6H; that stretch reads DSLLMKQRKFLYHFKNVRWAKGRHE. The region spanning 23–129 is the CMP/dCMP-type deaminase domain; it reads GRHETYLCYV…KAEPEGLRRL (107 aa). T27 carries the phosphothreonine; by PKA modification. S38 carries the post-translational modification Phosphoserine; by PKA. Residues 39–42 are important for interaction with CTNNBL1; that stretch reads ATSF. Residue H56 participates in Zn(2+) binding. The active-site Proton donor is E58. C87 and C90 together coordinate Zn(2+). The segment at 88–116 is required for interaction with RNF126; it reads YDCARHVADFLRGYPNLSLRIFAARLYFC. Residues 183 to 198 carry the Nuclear export signal motif; it reads LYEVDDLRDAFRTLGL.

It belongs to the cytidine and deoxycytidylate deaminase family. In terms of assembly, interacts with CTNNBL1; the interaction is important for the immunoglobulin switch activity of AICDA. Interacts (via its NLS) with KPNA1. Interacts with PKA/PRKACA and PRKAR1A/PKR1. Interacts with SUPT6H, TRIM28 and NCL. Directly interacts with MCM3AP; this interaction may favor AICDA recruitment to immunoglobulin variable region genes, hence promoting somatic hypermutations. Zn(2+) serves as cofactor. Ser-38 is the major site whereas Thr-27 is the minor site of phosphorylation. Phosphorylation regulates its class-switch recombination activity. Post-translationally, probably monoubiquitinated on several residues by RNF126. In terms of tissue distribution, expressed in thymus, lung, spleen, kidney, small intestine, lymph node and tonsil.

The protein localises to the nucleus. It localises to the cytoplasm. The catalysed reaction is a 2'-deoxycytidine in single-stranded DNA + H2O + H(+) = a 2'-deoxyuridine in single-stranded DNA + NH4(+). Functionally, single-stranded DNA-specific cytidine deaminase. Involved in somatic hypermutation (SHM), gene conversion, and class-switch recombination (CSR) in B-lymphocytes by deaminating C to U during transcription of Ig-variable (V) and Ig-switch (S) region DNA. Required for several crucial steps of B-cell terminal differentiation necessary for efficient antibody responses. May also play a role in the epigenetic regulation of gene expression by participating in DNA demethylation. The chain is Single-stranded DNA cytosine deaminase (AICDA) from Canis lupus familiaris (Dog).